We begin with the raw amino-acid sequence, 1050 residues long: MDS1 and EVI1 complex locus protein EVI1-B (1050 aa).

C2H2-type zinc fingers lie at residues 21–48 (YHCE…GTPH), 75–97 (HECK…LLSH), and 103–125 (YKCD…QMSH). Residues 131-155 (YECENCSKQVFTDPSNLQRHIRSQH) form a C2H2-type 4; degenerate zinc finger. 2 consecutive C2H2-type zinc fingers follow at residues 161 to 183 (HACS…KHIH) and 189 to 211 (FVCE…KRMH). Residues 218-240 (IKCKDCGQMFSTTSSLNKHRRFC) form a C2H2-type 7; atypical zinc finger. 2 disordered regions span residues 371 to 421 (ITEN…SDKD) and 529 to 612 (PLKV…EKKD). The span at 379-390 (RPHEKVSDHSES) shows a compositional bias: basic and acidic residues. Positions 397–411 (STPSGSDLETTSGSD) are enriched in polar residues. Positions 420 to 433 (KDKLKENGKLYKDK) match the Nuclear localization signal motif. A compositionally biased stretch (basic and acidic residues) spans 529 to 542 (PLKVEPESPKESKK). Positions 551–555 (AFDLT) match the CTBP-binding motif 1 motif. The segment covering 564–576 (SPNAPSKSSAPTS) has biased composition (low complexity). A CTBP-binding motif 2 motif is present at residues 582–586 (PLDLS). Positions 588 to 598 (GSRSRATTTKQ) are enriched in polar residues. A compositionally biased stretch (basic and acidic residues) spans 599–612 (TESRKNHIFGEKKD). 3 consecutive C2H2-type zinc fingers follow at residues 731–753 (YTCR…LRTH), 759–782 (YRCK…RNIH), and 788–810 (FKCH…LKKH). Residues 928 to 951 (KSEVNCKVSPSRHDDDDDDEEEDF) are disordered.

As to quaternary structure, homooligomer. Interacts with ctbp.

It is found in the nucleus. Its subcellular location is the nucleus speckle. Its function is as follows. Transcriptional repressor during pronephros development. Plays a role in regionalization of the pronephros; may promote formation of the distal tubule and duct over formation of the glomus and proximal tubule. The polypeptide is MDS1 and EVI1 complex locus protein EVI1-B (mecom-b) (Xenopus laevis (African clawed frog)).